The following is an 83-amino-acid chain: Small ribosomal subunit protein eS21 (83 aa).

The protein belongs to the eukaryotic ribosomal protein eS21 family. In terms of assembly, component of the 40S small ribosomal subunit.

Its subcellular location is the cytoplasm. The protein localises to the cytosol. It is found in the rough endoplasmic reticulum. Component of the small ribosomal subunit. The ribosome is a large ribonucleoprotein complex responsible for the synthesis of proteins in the cell. The polypeptide is Small ribosomal subunit protein eS21 (rps21) (Ictalurus punctatus (Channel catfish)).